Reading from the N-terminus, the 210-residue chain is Dynactin-associated protein (210 aa).

Residues 1–113 lie on the Cytoplasmic side of the membrane; the sequence is MVADIKGNEQ…YCRNDWSMWK (113 aa). The helical; Signal-anchor for type II membrane protein transmembrane segment at 114–134 threads the bilayer; that stretch reads VFLACLLACVIMTAIGVLIIC. At 135-210 the chain is on the extracellular side; sequence LVNNKGSANS…PITVAPTDHL (76 aa). A disordered region spans residues 168 to 210; that stretch reads ACPPTMTTTSTVPASTATESTTSTATAATTSTEPITVAPTDHL. The span at 171-203 shows a compositional bias: low complexity; the sequence is PTMTTTSTVPASTATESTTSTATAATTSTEPIT.

Interacts with DCTN1 and DCTN2. In terms of tissue distribution, expressed in fibroblast and numerous cancer cell lines (at protein level).

The protein resides in the golgi apparatus membrane. It localises to the cell membrane. Functionally, plays a role in the regulation of cell proliferation. Promotes activation of the AKT1 signaling pathway. Promotes phosphorylation of AKT1 at 'Ser-473'. This is Dynactin-associated protein (DYNAP) from Homo sapiens (Human).